The following is a 374-amino-acid chain: 5-aminosalicylate 1,2-dioxygenase (374 aa).

It belongs to the gentisate 1,2-dioxygenase family. Fe(2+) serves as cofactor.

The enzyme catalyses 5-amino-2-hydroxybenzoate + O2 = (2Z,4E)-4-amino-6-oxohepta-2,4-dienedioate + H(+). Inhibited by SDS and o-phenanthroline, a ferrous iron chelator. Partially inhibited by EDTA. Involved in the biodegradation of 3-aminobenzoate. Catalyzes the cleavage of the 5-aminosalicylate (5ASA) aromatic ring to form 4-amino-6-oxohepta-2,4-dienedioate (cis-ACOHDA). Can also convert gentisate, but the catalytic efficiency with 5ASA is 70-fold higher. The polypeptide is 5-aminosalicylate 1,2-dioxygenase (Comamonas sp).